A 445-amino-acid chain; its full sequence is Phosphoglucosamine mutase (445 aa).

Residue S99 is the Phosphoserine intermediate of the active site. Positions 99, 242, 244, and 246 each coordinate Mg(2+). A Phosphoserine modification is found at S99.

This sequence belongs to the phosphohexose mutase family. The cofactor is Mg(2+). Activated by phosphorylation.

The enzyme catalyses alpha-D-glucosamine 1-phosphate = D-glucosamine 6-phosphate. Catalyzes the conversion of glucosamine-6-phosphate to glucosamine-1-phosphate. This chain is Phosphoglucosamine mutase, found in Helicobacter pylori (strain Shi470).